A 701-amino-acid polypeptide reads, in one-letter code: MSGRAIGTETEWWVPGRVEIDDVAPVVSCGVYPAKAVVGEVVPVSAAVWREGHEAVAATLVVRYLGVRYPHLTDRPRARVLPTPSEPQQRVKPLLIPMTSGQEPFVFHGQFTPDRVGLWTFRVDGWGDPIHTWRHGLIAKLDAGQGETELSNDLLVGAVLLERAATGVPRGLRDPLLAAAAALRTPGDPVTRTALALTPEIEELLADYPLRDLVTRGEQFGVWVDRPLARFGAWYEMFPRSTGGWDDDGNPVHGTFATAAAELPRIAGMGFDVVYLPPIHPIGKVHRKGRNNSPTAAPTDVGSPWAIGSDEGGHDTVHPSLGTIDDFDDFVSAARDLGMEVALDLALQCAPDHPWAREHRQWFTELPDGTIAYAENPPKKYQDIYPLNFDNDPEGLYDEVLRVVQHWVNHGVKFFRVDNPHTKPPNFWAWLIAQVKTVDPDVLFLSEAFTPPARQYGLAKLGFTQSYSYFTWRTTKWELTEFGNQIAELADYRRPNLFVNTPDILHAVLQHNGPGMFAIRAVLAATMSPAWGMYCGYELFEHRAVREGSEEYLDSEKYELRPRDFASALDQGRSLQPFITRLNIIRRLHPAFQQLRTIHFHHVDNDALLAYSKFDPATGDCVLVVVTLNAFGPEEATLWLDMAALGMEDYDRFWVRDEITGEEYQWGQANYIRIDPARAVAHIINMPAVPYESRNTLLRRR.

The interval 286-317 (HRKGRNNSPTAAPTDVGSPWAIGSDEGGHDTV) is disordered. Lysine 288, glutamine 348, and aspartate 383 together coordinate alpha-maltose 1-phosphate. The Nucleophile role is filled by aspartate 418. An alpha-maltose 1-phosphate-binding site is contributed by asparagine 419. Glutamate 447 functions as the Proton donor in the catalytic mechanism. 557–558 (KY) lines the alpha-maltose 1-phosphate pocket.

This sequence belongs to the glycosyl hydrolase 13 family. GlgE subfamily. Homodimer.

It catalyses the reaction alpha-maltose 1-phosphate + [(1-&gt;4)-alpha-D-glucosyl](n) = [(1-&gt;4)-alpha-D-glucosyl](n+2) + phosphate. It functions in the pathway glycan biosynthesis; glycogen biosynthesis. Essential maltosyltransferase that uses maltose 1-phosphate (M1P) as the sugar donor to elongate linear or branched alpha-(1-&gt;4)-glucans. Maltooligosaccharides with a degree of polymerization (DP) superior or equal to 4 are efficient acceptors, with DP5 being optimal in the GlgE-catalyzed polymerization with M1P. Is specific for the alpha-anomer of M1P as substrate, since the beta-anomer of M1P gives no activity. Exhibits an alpha-retaining catalytic mechanism. Is also able to catalyze the reverse reaction in vitro, releasing M1P from glycogen in the presence of inorganic phosphate. Also catalyzes disproportionation reactions through maltosyl transfer between maltooligosaccharides. Is involved in a branched alpha-glucan biosynthetic pathway from trehalose, together with TreS, Mak and GlgB. The sequence is that of Alpha-1,4-glucan:maltose-1-phosphate maltosyltransferase (glgE) from Mycobacterium tuberculosis (strain CDC 1551 / Oshkosh).